The following is a 246-amino-acid chain: 5-oxoprolinase subunit A (246 aa).

The protein belongs to the LamB/PxpA family. Forms a complex composed of PxpA, PxpB and PxpC.

The enzyme catalyses 5-oxo-L-proline + ATP + 2 H2O = L-glutamate + ADP + phosphate + H(+). Its function is as follows. Catalyzes the cleavage of 5-oxoproline to form L-glutamate coupled to the hydrolysis of ATP to ADP and inorganic phosphate. The chain is 5-oxoprolinase subunit A from Cupriavidus pinatubonensis (strain JMP 134 / LMG 1197) (Cupriavidus necator (strain JMP 134)).